Reading from the N-terminus, the 304-residue chain is MGQCVTKCKNPSSTLGSKNGDRDPSNKSHSRRGAGHREEQVPPCGKPGGDILVNGTKKAEAATEACQLPTSSGDAGRESKSNAEESSLQRLEELFRRYKDEREDAILEEGMERFCNDLCVDPTEFRVLLLAWKFQAATMCKFTRKEFFDGCKAISADSIDGICARFPSLLTEAKQEDKFKDLYRFTFQFGLDSEEGQRSLHREIAIALWKLVFTQNNPPVLDQWLNFLTENPSGIKGISRDTWNMFLNFTQVIGPDLSNYSEDEAWPSLFDTFVEWEMERRKREGEGRGALSSGPEGLCPEEQT.

Disordered stretches follow at residues 1–86 and 284–304; these read MGQC…AEES and EGEG…EEQT. The N-myristoyl glycine moiety is linked to residue G2. Residues 86–278 enclose the DCUN1 domain; the sequence is SSLQRLEELF…LFDTFVEWEM (193 aa).

As to quaternary structure, part of a complex containing DCUN1D3, CUL3 and RBX1. Interacts (via the DCUN1 domain) with the unneddylated cullins: interacts with CUL1, CUL2, CUL3, CUL4A, CUL4B and CUL5; these interactions promote the cullin neddylation and the identity of the cullin dictates the affinity of the interaction. Interacts preferentially with CUL3; this interaction triggers the relocalization of CUL3 to the cell membrane where CUL3 is neddylated. Interacts (via DCUN1 domain) with RBX1. May also interact with regulators or subunits of cullin-RING ligases such as RNF7, ELOB and DDB1; these interactions are bridged by cullins. Interacts (via DCUN1 domain) with CAND1; this interaction is bridged by cullins and strongly inhibits cullin neddylation. These CAND-cullin-DCNL complexes can only be neddylated in the presence of a substrate adapter. Interacts (via DCUN1 domain) with the N-terminally acetylated form of UBE2M and UBE2F.

It localises to the cell membrane. The protein resides in the cytoplasm. The protein localises to the nucleus. Its subcellular location is the perinuclear region. Its function is as follows. Contributes to the neddylation of all cullins by transferring NEDD8 from N-terminally acetylated NEDD8-conjugating E2s enzyme to different cullin C-terminal domain-RBX complexes and may play a role in the cell cycle progression by regulating the SCF ubiquitin E3 ligase complex, after UV damage. At the cell membrane, can promote and as well inhibit cullins neddylation. The chain is DCN1-like protein 3 from Pongo abelii (Sumatran orangutan).